A 291-amino-acid chain; its full sequence is MLTTAILFTSLAGSAYAHVAAFAPGMFCRGGNNPAVNDQDTNIAVNPLYNLPFSQWWMQADRGCNLAPPPAGEYLNLPAGGAFTVELAVNQAFTTLSWGGSRTTAWPDGGNHPDDWHGPDVGEGCLSDNPGGEGGALHTHNETTAAGTAWAISYEADIANVRLDNLVVFTTLEHTPFRRLATYQVPKDLPPCPPGGCYCAWLWVPKGCGEPNMYMQNYKCQVTGSTSTKRVSTPKPPVYCGDDSSKCVKGAKQMIAWHQLDGNNIVTAPGVFPGYNPTTGYTVGAQNDIFQ.

An N-terminal signal peptide occupies residues 1 to 17 (MLTTAILFTSLAGSAYA). N-linked (GlcNAc...) asparagine glycosylation occurs at asparagine 141. Intrachain disulfides connect cysteine 192-cysteine 197, cysteine 199-cysteine 220, and cysteine 240-cysteine 247.

The protein belongs to the polysaccharide monooxygenase AA14 family. Cu(2+) is required as a cofactor.

The protein resides in the secreted. In terms of biological role, lytic polysaccharide monooxygenase (LPMO) that is active against heteroxylan, xyloglucan and cellulose in beta-cellulose and released native oligosaccharides and corresponding C1- and/or C4-oxidized products. May act mainly on heteroxylan with numerous arabinosyl substituents between cellulose fibers rather than on recalcitrant xylan tightly associated with cellulose. Catalysis by LPMOs requires the reduction of the active-site copper from Cu(II) to Cu(I) by a reducing agent and H(2)O(2) or O(2) as a cosubstrate. Shows a branched chain preference, and has synergistic effects with the Penicillium parvum debranching enzyme ABF62C in an enzyme- and ascorbic acid-dependent manner. Also has synergistic effects with the Penicillium parvum GH10 endoxylanase XYN1, and the degree of synergy was greater with step-by-step addition than with simultaneous addition. This Sordaria brevicollis protein is AA14 family lytic polysaccharide monooxygenase.